Consider the following 88-residue polypeptide: MAHKKGASSSRNGRDSNAQRLGVKRFGGQTVKAGEILVRQRGTHFHPGVNVGRGGDDTLFALAAGAVQFGTKRGRKTVNIVAPAPVQA.

A disordered region spans residues 1-25 (MAHKKGASSSRNGRDSNAQRLGVKR). Over residues 7 to 19 (ASSSRNGRDSNAQ) the composition is skewed to polar residues.

This sequence belongs to the bacterial ribosomal protein bL27 family.

The protein is Large ribosomal subunit protein bL27 of Nocardia farcinica (strain IFM 10152).